A 471-amino-acid polypeptide reads, in one-letter code: Histone deacetylase 6 (471 aa).

Position 1 is an N-acetylmethionine (methionine 1). Residues 20–333 form a histone deacetylase region; it reads RVSYFYEPTI…WCYETAVAVG (314 aa). The active-site Proton donor/acceptor is histidine 153. Zn(2+)-binding residues include aspartate 188, histidine 190, and aspartate 276. A disordered region spans residues 389 to 471; it reads PSVQFQHTPP…PEPDVNPPSS (83 aa). A compositionally biased stretch (acidic residues) spans 453 to 463; sequence GEDEMDDDNPE.

This sequence belongs to the histone deacetylase family. HD type 1 subfamily. As to quaternary structure, interacts with Coi1, which functions in an SCF complex that recruits regulators for ubiquitination. Interacts with AHL22. Interacts with AS1. Part of the AS1 repressor complex composed of AS1, LBD6/AS2 and HDA6. Binds to EBS and SHL. Interacts with MBD6. Interacts with HDA5. Interacts with FLD. Zn(2+) serves as cofactor. Not detected in leaves, stems, flowers and young siliques.

The protein localises to the nucleus. Its subcellular location is the nucleolus. The catalysed reaction is N(6)-acetyl-L-lysyl-[histone] + H2O = L-lysyl-[histone] + acetate. With respect to regulation, inhibited by trichostatin A. Responsible for the deacetylation of lysine residues on the N-terminal part of the core histones (H2A, H2B, H3 and H4). Might remove acetyl residues only from specific targets, such as rDNA repeats or complex transgenes. Histone deacetylation gives a tag for epigenetic repression and plays an important role in transcriptional regulation, cell cycle progression and developmental events. Histone deacetylases act via the formation of large multiprotein complexes. Required for rRNA gene silencing in nucleolar dominance. Plays a role in transgene silencing, but this effect seems to bee independent of the histone deacetylase activity. Part of the AS1 repressor complex to regulate the KNOX expression in leaf development. Binds to KNAT1, KNAT2, and KNATM chromatin. Involved in the regulation of flowering time. Forms a histone deacetylase complex with HDA5, FLD and MSI4/FVE that represses FLC gene expression to control flowering time. This is Histone deacetylase 6 from Arabidopsis thaliana (Mouse-ear cress).